A 152-amino-acid polypeptide reads, in one-letter code: TOMM20-like protein 1 (152 aa).

Residues 1–9 (MPSVRSLLR) lie on the Mitochondrial intermembrane side of the membrane. A helical membrane pass occupies residues 10-29 (LLAAAAACGAFAFLGYCIYL). The Cytoplasmic segment spans residues 30 to 152 (NRKRRGDPAF…EQDCLEDDPD (123 aa)). The interval 43–62 (LRDKRRAEPQKAEEQGTQLW) is disordered. The span at 47-56 (RRAEPQKAEE) shows a compositional bias: basic and acidic residues.

Belongs to the Tom20 family.

Its subcellular location is the mitochondrion outer membrane. The protein is TOMM20-like protein 1 (TOMM20L) of Homo sapiens (Human).